Consider the following 376-residue polypeptide: Copper-containing nitrite reductase (376 aa).

A signal peptide (tat-type signal) is located at residues 1-33 (MAEQMQISRRTILAGAALAGALAPVLATTSAWG). Gln-34 carries the pyrrolidone carboxylic acid modification. Plastocyanin-like domains are found at residues 34-211 (QGAV…YDKI) and 212-376 (YYVG…PSGT). 7 residues coordinate Cu cation: His-131, His-136, His-171, Cys-172, His-181, Met-186, and His-342.

The protein belongs to the multicopper oxidase family. As to quaternary structure, homotrimer. Requires Cu(2+) as cofactor. The cofactor is Cu(+). FAD is required as a cofactor. Post-translationally, predicted to be exported by the Tat system. The position of the signal peptide cleavage has been experimentally proven.

It is found in the periplasm. The enzyme catalyses nitric oxide + Fe(III)-[cytochrome c] + H2O = Fe(II)-[cytochrome c] + nitrite + 2 H(+). Its pathway is nitrogen metabolism; nitrate reduction (denitrification); dinitrogen from nitrate: step 2/4. In Alcaligenes faecalis, this protein is Copper-containing nitrite reductase (nirK).